The sequence spans 954 residues: E3 ubiquitin-protein ligase MIB2 (954 aa).

In terms of domain architecture, MIB/HERC2 1 spans 1–80 (MDLDPYASMQ…AYDLLLYDNA (80 aa)). The ZZ-type zinc-finger motif lies at 86–138 (HPNIICDCCKKHGIRGMRWKCKMCFDYDLCTQCYMNNKHDLSHAFERYETAHS). Positions 91, 94, 106, 109, 115, 118, 124, and 128 each coordinate Zn(2+). An MIB/HERC2 2 domain is found at 149 to 227 (LTRITLKGTF…KVDLKCTVEA (79 aa)). ANK repeat units follow at residues 464-493 (QGRT…TVNL), 497-526 (EGDT…GADL), 530-559 (AKCT…DVNL), 563-591 (HGDT…NIDF), 597-626 (QGFN…QLVD), 631-661 (DGFT…DVNV), 665-694 (RNQT…DVNA), 698-726 (DGDT…EMGS), and 766-795 (RGKS…EQQV). RING-type zinc fingers lie at residues 830 to 865 (CLVC…IKCQ) and 910 to 943 (CPIC…PICR).

Its subcellular location is the cytoplasm. It carries out the reaction S-ubiquitinyl-[E2 ubiquitin-conjugating enzyme]-L-cysteine + [acceptor protein]-L-lysine = [E2 ubiquitin-conjugating enzyme]-L-cysteine + N(6)-ubiquitinyl-[acceptor protein]-L-lysine.. Its pathway is protein modification; protein ubiquitination. Its function is as follows. E3 ubiquitin-protein ligase that mediates ubiquitination of Delta receptors, which act as ligands of Notch proteins. Positively regulates the Delta-mediated Notch signaling by ubiquitinating the intracellular domain of Delta, leading to endocytosis of Delta receptors. The protein is E3 ubiquitin-protein ligase MIB2 (MIB2) of Gallus gallus (Chicken).